Consider the following 303-residue polypeptide: Flavin-dependent thymidylate synthase (303 aa).

Positions 41 to 258 (GKVALVDTMP…PVACEAFIDY (218 aa)) constitute a ThyX domain. FAD contacts are provided by residues S95, 118-120 (RHR), and E126. Residues 115–118 (QWIR), 126–130 (EYSAR), and R197 each bind dUMP. The ThyX motif signature appears at 118-128 (RHRTANVNEYS). Residues 213 to 215 (DLH) and H219 contribute to the FAD site. R224 contacts dUMP. The Involved in ionization of N3 of dUMP, leading to its activation role is filled by R224.

It belongs to the thymidylate synthase ThyX family. As to quaternary structure, homotetramer. Requires FAD as cofactor.

It catalyses the reaction dUMP + (6R)-5,10-methylene-5,6,7,8-tetrahydrofolate + NADPH + H(+) = dTMP + (6S)-5,6,7,8-tetrahydrofolate + NADP(+). It participates in pyrimidine metabolism; dTTP biosynthesis. Functionally, catalyzes the reductive methylation of 2'-deoxyuridine-5'-monophosphate (dUMP) to 2'-deoxythymidine-5'-monophosphate (dTMP) while utilizing 5,10-methylenetetrahydrofolate (mTHF) as the methyl donor, and NADPH and FADH(2) as the reductant. The polypeptide is Flavin-dependent thymidylate synthase (thyA) (Dictyostelium discoideum (Social amoeba)).